Here is a 369-residue protein sequence, read N- to C-terminus: Cytoplasmic tRNA 2-thiolation protein 1 (369 aa).

The protein belongs to the TtcA family. CTU1/NCS6/ATPBD3 subfamily.

The protein resides in the cytoplasm. The protein operates within tRNA modification; 5-methoxycarbonylmethyl-2-thiouridine-tRNA biosynthesis. In terms of biological role, plays a central role in 2-thiolation of mcm(5)S(2)U at tRNA wobble positions of tRNA(Lys), tRNA(Glu) and tRNA(Gln). Directly binds tRNAs and probably acts by catalyzing adenylation of tRNAs, an intermediate required for 2-thiolation. It is unclear whether it acts as a sulfurtransferase that transfers sulfur from thiocarboxylated URM1 onto the uridine of tRNAs at wobble position. Prior mcm(5) tRNA modification by the elongator complex is required for 2-thiolation. May also be involved in protein urmylation. The sequence is that of Cytoplasmic tRNA 2-thiolation protein 1 from Meyerozyma guilliermondii (strain ATCC 6260 / CBS 566 / DSM 6381 / JCM 1539 / NBRC 10279 / NRRL Y-324) (Yeast).